The primary structure comprises 110 residues: Phosphoribosyl-ATP pyrophosphatase (110 aa).

Belongs to the PRA-PH family.

It is found in the cytoplasm. It catalyses the reaction 1-(5-phospho-beta-D-ribosyl)-ATP + H2O = 1-(5-phospho-beta-D-ribosyl)-5'-AMP + diphosphate + H(+). Its pathway is amino-acid biosynthesis; L-histidine biosynthesis; L-histidine from 5-phospho-alpha-D-ribose 1-diphosphate: step 2/9. The sequence is that of Phosphoribosyl-ATP pyrophosphatase from Clostridium botulinum (strain ATCC 19397 / Type A).